Consider the following 103-residue polypeptide: Co-chaperonin GroES (103 aa).

Belongs to the GroES chaperonin family. In terms of assembly, heptamer of 7 subunits arranged in a ring. Interacts with the chaperonin GroEL.

The protein resides in the cytoplasm. Together with the chaperonin GroEL, plays an essential role in assisting protein folding. The GroEL-GroES system forms a nano-cage that allows encapsulation of the non-native substrate proteins and provides a physical environment optimized to promote and accelerate protein folding. GroES binds to the apical surface of the GroEL ring, thereby capping the opening of the GroEL channel. In Synechococcus sp. (strain CC9605), this protein is Co-chaperonin GroES.